The following is a 227-amino-acid chain: Guanylate kinase (227 aa).

A Guanylate kinase-like domain is found at 21-199 (GNLFMVVAPS…ALAELECIVA (179 aa)). Residue 28–35 (APSGAGKS) participates in ATP binding.

This sequence belongs to the guanylate kinase family.

Its subcellular location is the cytoplasm. It carries out the reaction GMP + ATP = GDP + ADP. In terms of biological role, essential for recycling GMP and indirectly, cGMP. This chain is Guanylate kinase, found in Burkholderia thailandensis (strain ATCC 700388 / DSM 13276 / CCUG 48851 / CIP 106301 / E264).